Consider the following 350-residue polypeptide: Uroporphyrinogen decarboxylase (350 aa).

Residues arginine 27–arginine 31, phenylalanine 46, aspartate 76, tyrosine 152, serine 207, and histidine 321 each bind substrate.

It belongs to the uroporphyrinogen decarboxylase family. In terms of assembly, homodimer.

It is found in the cytoplasm. It catalyses the reaction uroporphyrinogen III + 4 H(+) = coproporphyrinogen III + 4 CO2. Its pathway is porphyrin-containing compound metabolism; protoporphyrin-IX biosynthesis; coproporphyrinogen-III from 5-aminolevulinate: step 4/4. In terms of biological role, catalyzes the decarboxylation of four acetate groups of uroporphyrinogen-III to yield coproporphyrinogen-III. The protein is Uroporphyrinogen decarboxylase of Listeria welshimeri serovar 6b (strain ATCC 35897 / DSM 20650 / CCUG 15529 / CIP 8149 / NCTC 11857 / SLCC 5334 / V8).